The primary structure comprises 614 residues: Methionine--tRNA ligase (614 aa).

Positions 11–21 match the 'HIGH' region motif; sequence PYTNGPRHIGH. The Zn(2+) site is built by Cys143, Cys146, Cys156, and Cys159. Residues 359 to 363 carry the 'KMSKS' region motif; that stretch reads QFSTS. Residue Thr362 participates in ATP binding.

It belongs to the class-I aminoacyl-tRNA synthetase family. MetG type 1 subfamily. As to quaternary structure, monomer. Zn(2+) serves as cofactor.

It localises to the cytoplasm. The catalysed reaction is tRNA(Met) + L-methionine + ATP = L-methionyl-tRNA(Met) + AMP + diphosphate. Functionally, is required not only for elongation of protein synthesis but also for the initiation of all mRNA translation through initiator tRNA(fMet) aminoacylation. In Beutenbergia cavernae (strain ATCC BAA-8 / DSM 12333 / CCUG 43141 / JCM 11478 / NBRC 16432 / NCIMB 13614 / HKI 0122), this protein is Methionine--tRNA ligase.